The following is a 61-amino-acid chain: MPIDRKKLSKTITGDKSSSVLFTEKLKKVPPTPFQKEFDRINESSALEYNKGLMKPKRDRE.

This is an uncharacterized protein from Dictyostelium discoideum (Social amoeba).